Here is a 124-residue protein sequence, read N- to C-terminus: Large ribosomal subunit protein bL12 (124 aa).

The tract at residues 99–124 (KEGMNKEDAEKAKADLEAAGAKVELK) is disordered. Over residues 101–114 (GMNKEDAEKAKADL) the composition is skewed to basic and acidic residues. The segment covering 115–124 (EAAGAKVELK) has biased composition (low complexity).

It belongs to the bacterial ribosomal protein bL12 family. In terms of assembly, homodimer. Part of the ribosomal stalk of the 50S ribosomal subunit. Forms a multimeric L10(L12)X complex, where L10 forms an elongated spine to which 2 to 4 L12 dimers bind in a sequential fashion. Binds GTP-bound translation factors.

Functionally, forms part of the ribosomal stalk which helps the ribosome interact with GTP-bound translation factors. Is thus essential for accurate translation. This Campylobacter hominis (strain ATCC BAA-381 / DSM 21671 / CCUG 45161 / LMG 19568 / NCTC 13146 / CH001A) protein is Large ribosomal subunit protein bL12.